The chain runs to 54 residues: Pars intercerebralis major peptide D1 (54 aa).

The protein belongs to the granulin family. Six disulfide bonds are present. In terms of tissue distribution, brain.

The protein resides in the secreted. In Locusta migratoria (Migratory locust), this protein is Pars intercerebralis major peptide D1.